The following is a 438-amino-acid chain: Ribosomal protein uS12 methylthiotransferase RimO (438 aa).

Residues 5 to 116 (PTIAISHLGC…IVQVIQRVEN (112 aa)) enclose the MTTase N-terminal domain. Residues C14, C50, C79, C154, C158, and C161 each coordinate [4Fe-4S] cluster. Positions 140–369 (TTSEGVAYLR…MQIQQPISLQ (230 aa)) constitute a Radical SAM core domain. The 67-residue stretch at 372–438 (CACIGDIVDV…IYDLYGEVIN (67 aa)) folds into the TRAM domain.

It belongs to the methylthiotransferase family. RimO subfamily. Requires [4Fe-4S] cluster as cofactor.

Its subcellular location is the cytoplasm. The enzyme catalyses L-aspartate(89)-[ribosomal protein uS12]-hydrogen + (sulfur carrier)-SH + AH2 + 2 S-adenosyl-L-methionine = 3-methylsulfanyl-L-aspartate(89)-[ribosomal protein uS12]-hydrogen + (sulfur carrier)-H + 5'-deoxyadenosine + L-methionine + A + S-adenosyl-L-homocysteine + 2 H(+). In terms of biological role, catalyzes the methylthiolation of an aspartic acid residue of ribosomal protein uS12. The chain is Ribosomal protein uS12 methylthiotransferase RimO from Gloeothece citriformis (strain PCC 7424) (Cyanothece sp. (strain PCC 7424)).